The following is a 560-amino-acid chain: Nitrite reductase (560 aa).

The N-terminal stretch at methionine 1–alanine 26 is a signal peptide. Residues alanine 27–proline 29 form an N-terminal tail region. The 97-residue stretch at glutamate 30 to isoleucine 126 folds into the Cytochrome c domain. 3 residues coordinate heme c: cysteine 47, cysteine 50, and histidine 51. Residues lysine 61–glycine 80 form a disordered region. The span at leucine 63 to glutamate 78 shows a compositional bias: basic and acidic residues. Heme c is bound by residues threonine 97 and methionine 101. A D1-heme domain region spans residues proline 127–tyrosine 560. Heme d1-binding residues include histidine 193, arginine 236, serine 237, tyrosine 256, arginine 382, and glutamine 500.

As to quaternary structure, homodimer in solution. The cofactor is heme c. Heme serves as cofactor.

It localises to the periplasm. The catalysed reaction is nitric oxide + Fe(III)-[cytochrome c] + H2O = Fe(II)-[cytochrome c] + nitrite + 2 H(+). The enzyme catalyses A + NH4(+) + H2O = hydroxylamine + AH2 + H(+). The sequence is that of Nitrite reductase (nirS) from Stutzerimonas stutzeri (Pseudomonas stutzeri).